The primary structure comprises 349 residues: Hyaluronidase Tab y 2.0101 (349 aa).

Residues 1–25 (MKLHQGLVCLSVLILLPTCILGDRK) form the signal peptide. Intrachain disulfides connect Cys37/Cys328 and Cys205/Cys216. 4 N-linked (GlcNAc...) asparagine glycosylation sites follow: Asn41, Asn81, Asn99, and Asn119. Residue Glu129 is the Proton donor of the active site. N-linked (GlcNAc...) asparagine glycosylation is present at Asn147. Residues Asn251 and Asn297 are each glycosylated (N-linked (GlcNAc...) asparagine).

This sequence belongs to the glycosyl hydrolase 56 family. In terms of tissue distribution, expressed in salivary glands.

It is found in the secreted. The enzyme catalyses Random hydrolysis of (1-&gt;4)-linkages between N-acetyl-beta-D-glucosamine and D-glucuronate residues in hyaluronate.. Its function is as follows. Hydrolyzes high molecular weight hyaluronic acid to produce small oligosaccharides. This chain is Hyaluronidase Tab y 2.0101, found in Tabanus yao (Horsefly).